Here is a 262-residue protein sequence, read N- to C-terminus: Hemin import ATP-binding protein HmuV (262 aa).

Residues 3–244 (LQARNLTLAR…DHMRRVYGIE (242 aa)) form the ABC transporter domain. 35–42 (GANGAGKS) is a binding site for ATP.

Belongs to the ABC transporter superfamily. Heme (hemin) importer (TC 3.A.1.14.5) family. In terms of assembly, the complex is composed of two ATP-binding proteins (HmuV), two transmembrane proteins (HmuU) and a solute-binding protein (HmuT).

It localises to the cell inner membrane. Functionally, part of the ABC transporter complex HmuTUV involved in hemin import. Responsible for energy coupling to the transport system. The protein is Hemin import ATP-binding protein HmuV of Bordetella parapertussis (strain 12822 / ATCC BAA-587 / NCTC 13253).